We begin with the raw amino-acid sequence, 193 residues long: Early light-induced protein 2, chloroplastic (193 aa).

The transit peptide at 1–43 (MATASFNMQSVFAAPSGVLTTRNIRNTNQLFFKRIAPVGVRCM) directs the protein to the chloroplast. The segment at 46–80 (GDPIKEDPSVPSTSTSATPPQMPQSPPPPVSKPKV) is disordered. Positions 54–64 (SVPSTSTSATP) are enriched in low complexity. Pro residues predominate over residues 65–76 (PQMPQSPPPPVS). A run of 3 helical transmembrane segments spans residues 102-122 (LAMVGFVAAIAMELSKGENVF), 129-149 (GVGWFLGTTALLTLASMVPLF), and 173-193 (FAMLGLVALAFTEYVTGGTLV).

This sequence belongs to the ELIP/psbS family.

It is found in the plastid. The protein resides in the chloroplast thylakoid membrane. In terms of biological role, probably involved in the integration of pigments into the mature light-harvesting pigment-protein complexes. Light-harvesting chlorophyll (LHC) a/b-binding protein required to ensure a high rate of chlorophyll accumulation during deetiolation in continuous high light. Involved in seed germination. May fulfill a photoprotective functions. Prevents excess accumulation of free chlorophyll by inhibiting the entire chlorophyll biosynthesis pathway (e.g. 5-aminolevulinate synthesis and Mg-protoporphyrin IX chelatase activity), and hence prevent photooxidative stress. The chain is Early light-induced protein 2, chloroplastic from Arabidopsis thaliana (Mouse-ear cress).